The chain runs to 201 residues: Large ribosomal subunit protein uL4 (201 aa).

The tract at residues 42 to 67 (GNSAQKTRSEVSGGGKKPWNQKGTGR) is disordered.

Belongs to the universal ribosomal protein uL4 family. Part of the 50S ribosomal subunit.

One of the primary rRNA binding proteins, this protein initially binds near the 5'-end of the 23S rRNA. It is important during the early stages of 50S assembly. It makes multiple contacts with different domains of the 23S rRNA in the assembled 50S subunit and ribosome. Functionally, forms part of the polypeptide exit tunnel. The polypeptide is Large ribosomal subunit protein uL4 (Legionella pneumophila (strain Corby)).